The following is a 300-amino-acid chain: Histone deacetylase HDT3 (300 aa).

Residues 98-112 (EDEMDLDSEDEDEEL) show a composition bias toward acidic residues. The tract at residues 98-300 (EDEMDLDSED…AHSKAKHGGK (203 aa)) is disordered. Residues 119 to 132 (ENGKADEKKQKSQE) are compositionally biased toward basic and acidic residues. Acidic residues predominate over residues 151-197 (DDDSDEDETDDSDEDETDDSDEGLSPEEGDDDSSDEDDTSDDEEEDT). Residues 198–211 (PTPKKPEVGKKRAA) are compositionally biased toward basic and acidic residues. Low complexity predominate over residues 265 to 275 (SPKSAPKSGVP). The C2H2-type zinc finger occupies 274–297 (VPCKSCSKSFISETAPQAHSKAKH). Positions 279 to 290 (CSKSFISETAPQ) are enriched in polar residues.

It belongs to the histone deacetylase HD2 family. As to quaternary structure, multimer. Possibly forms a homotrimer with HDT1 and/or HDT2.

It localises to the nucleus. Its subcellular location is the nucleolus. Mediates the deacetylation of lysine residues on the N-terminal part of the core histones (H2A, H2B, H3 and H4). Histone deacetylation gives a tag for epigenetic repression and plays an important role in transcriptional regulation, cell cycle progression and developmental events. The polypeptide is Histone deacetylase HDT3 (HDT3) (Zea mays (Maize)).